A 132-amino-acid chain; its full sequence is Agouti-signaling protein (132 aa).

Residues 1–22 (MDVTRLLLATLLVFLCFFTACS) form the signal peptide. The N-linked (GlcNAc...) asparagine glycan is linked to Asn39. Positions 61-87 (QISRKEAEKKRSSKKEASMKKVARPRT) are disordered. Positions 63–79 (SRKEAEKKRSSKKEASM) are enriched in basic and acidic residues. Cystine bridges form between Cys93–Cys108, Cys100–Cys114, Cys107–Cys125, Cys111–Cys132, and Cys116–Cys123. Residues 93–132 (CVATRDSCKPPAPACCDPCASCQCRFFRSACSCRVLSLNC) enclose the Agouti domain.

The protein localises to the secreted. Involved in the regulation of melanogenesis. The binding of ASP to MC1R precludes alpha-MSH initiated signaling and thus blocks production of cAMP, leading to a down-regulation of eumelanogenesis (brown/black pigment) and thus increasing synthesis of pheomelanin (yellow/red pigment). The protein is Agouti-signaling protein (ASIP) of Macaca nigrescens (Gorontalo macaque).